The sequence spans 229 residues: Flagellar L-ring protein (229 aa).

The signal sequence occupies residues 1–23; it reads MNPLTRVALAVAAFAALVLALSA. Cys-24 is lipidated: N-palmitoyl cysteine. Residue Cys-24 is the site of S-diacylglycerol cysteine attachment.

Belongs to the FlgH family. In terms of assembly, the basal body constitutes a major portion of the flagellar organelle and consists of four rings (L,P,S, and M) mounted on a central rod.

It localises to the cell outer membrane. The protein resides in the bacterial flagellum basal body. In terms of biological role, assembles around the rod to form the L-ring and probably protects the motor/basal body from shearing forces during rotation. This Anaeromyxobacter sp. (strain K) protein is Flagellar L-ring protein.